Consider the following 73-residue polypeptide: Kappa-scoloptoxin(03)-Ssm1b (73 aa).

Positions 1–23 (MKPSMAILLVIALIIFSLDKSYS) are cleaved as a signal peptide. 3 cysteine pairs are disulfide-bonded: cysteine 32-cysteine 58, cysteine 41-cysteine 57, and cysteine 44-cysteine 67.

Post-translationally, contains 3 disulfide bonds. As to expression, expressed by the venom gland.

The protein localises to the secreted. Functionally, inhibits voltage-gated potassium channels. The protein is Kappa-scoloptoxin(03)-Ssm1b of Scolopendra mutilans (Chinese red-headed centipede).